The sequence spans 172 residues: Small ribosomal subunit protein uS5 (172 aa).

Residues 17 to 80 (LREKMISVNR…EQARRNMFKV (64 aa)) form the S5 DRBM domain.

Belongs to the universal ribosomal protein uS5 family. Part of the 30S ribosomal subunit. Contacts proteins S4 and S8.

In terms of biological role, with S4 and S12 plays an important role in translational accuracy. Located at the back of the 30S subunit body where it stabilizes the conformation of the head with respect to the body. The sequence is that of Small ribosomal subunit protein uS5 from Burkholderia thailandensis (strain ATCC 700388 / DSM 13276 / CCUG 48851 / CIP 106301 / E264).